The chain runs to 785 residues: DNA ligase (785 aa).

Residues 32–36, 81–82, and E121 contribute to the NAD(+) site; these read DAEYD and SL. Residue K123 is the N6-AMP-lysine intermediate of the active site. The NAD(+) site is built by R144, E181, K297, and K321. Residues C415, C418, C445, and C451 each coordinate Zn(2+). A BRCT domain is found at 702 to 785; it reads VEGLPLAGET…AFLKGHGISA (84 aa).

This sequence belongs to the NAD-dependent DNA ligase family. LigA subfamily. Requires Mg(2+) as cofactor. Mn(2+) serves as cofactor.

The enzyme catalyses NAD(+) + (deoxyribonucleotide)n-3'-hydroxyl + 5'-phospho-(deoxyribonucleotide)m = (deoxyribonucleotide)n+m + AMP + beta-nicotinamide D-nucleotide.. Functionally, DNA ligase that catalyzes the formation of phosphodiester linkages between 5'-phosphoryl and 3'-hydroxyl groups in double-stranded DNA using NAD as a coenzyme and as the energy source for the reaction. It is essential for DNA replication and repair of damaged DNA. The sequence is that of DNA ligase from Pseudomonas fluorescens (strain Pf0-1).